We begin with the raw amino-acid sequence, 80 residues long: Exodeoxyribonuclease 7 small subunit (80 aa).

The protein belongs to the XseB family. Heterooligomer composed of large and small subunits.

It is found in the cytoplasm. It carries out the reaction Exonucleolytic cleavage in either 5'- to 3'- or 3'- to 5'-direction to yield nucleoside 5'-phosphates.. Its function is as follows. Bidirectionally degrades single-stranded DNA into large acid-insoluble oligonucleotides, which are then degraded further into small acid-soluble oligonucleotides. The sequence is that of Exodeoxyribonuclease 7 small subunit from Citrobacter koseri (strain ATCC BAA-895 / CDC 4225-83 / SGSC4696).